Here is a 325-residue protein sequence, read N- to C-terminus: Neural proliferation differentiation and control protein 1 (325 aa).

A signal peptide spans 1-34; sequence MATPLPPPSPRHLRLLRLLLSGLVLGAALRGAAA. Positions 138-175 are disordered; it reads QGLELGLPSTPGTPTPTPHTSLGSPVSSDPVHMSPLEP. The chain crosses the membrane as a helical span at residues 182 to 202; it reads GLALVLILAFCVAGAAALSVA. S229 carries the phosphoserine modification. Residues 266 to 290 are disordered; sequence EPPKELDTASSDEENEDGDFTVYEC. Residues 275–284 show a composition bias toward acidic residues; sequence SSDEENEDGD.

It belongs to the NPDC1/cab-1 family. In terms of tissue distribution, strongly expressed in adult brain; especially in hippocampus, frontal lobe and temporal lobe.

The protein localises to the membrane. Its function is as follows. Suppresses oncogenic transformation in neural and non-neural cells and down-regulates neural cell proliferation. Might be involved in transcriptional regulation. This Homo sapiens (Human) protein is Neural proliferation differentiation and control protein 1 (NPDC1).